Consider the following 333-residue polypeptide: L-lactate dehydrogenase B chain (333 aa).

NAD(+) is bound by residues 29–57 (GQVG…WEDK) and Arg99. Substrate is bound by residues Arg106, Asn138, and Arg169. Asn138 provides a ligand contact to NAD(+). His193 acts as the Proton acceptor in catalysis. Thr248 serves as a coordination point for substrate.

The protein belongs to the LDH/MDH superfamily. LDH family. As to quaternary structure, homotetramer.

It is found in the cytoplasm. It catalyses the reaction (S)-lactate + NAD(+) = pyruvate + NADH + H(+). Its pathway is fermentation; pyruvate fermentation to lactate; (S)-lactate from pyruvate: step 1/1. Interconverts simultaneously and stereospecifically pyruvate and lactate with concomitant interconversion of NADH and NAD(+). The chain is L-lactate dehydrogenase B chain (LDHB) from Trachemys scripta elegans (Red-eared slider turtle).